A 242-amino-acid polypeptide reads, in one-letter code: Platinum sensitivity protein 3 (242 aa).

Component of the SHU complex composed of at least CSM2, PSY3, SHU1 and SHU2.

The protein resides in the nucleus. Its function is as follows. Required for resistance to the DNA-damaging agents methyl methanesulfonate (MMS), cisplatin and oxaliplatin, but not to mitomycin C. Plays a role in protection against mutation accumulation. May be a component of the recombination-repair pathway. In Saccharomyces cerevisiae (strain ATCC 204508 / S288c) (Baker's yeast), this protein is Platinum sensitivity protein 3 (PSY3).